The sequence spans 1049 residues: MGSSDEAGSSKHHRRDKEKDRERSSSRHHRDRDRERSSSRHHHREDRDDDRDRDRDRERRHREKERDREERKAREREEREKEKERERARRREERDREERSRRREAAAEEEEEDVDRDRKRRRRSSHHHHHHRDAEPEGPASGAREEEVVDVEEAERRRQKKKEEEQKQLDEEMETRRRRIKEWQEMKRREEETKRREQEEAGVGTSAAAAAAPAEAEDGGNAGKKWTLDGEESDEEGNQEDGKKSDDNGGSGAGAMDVDVPNGGDNANGANAMDEDEIDPLDAFMNSMVLPEVAKLESMPAANVDDKNDKSAKDAVTNGDKKGPKKVMGRIIQGEDSDSDYADDEDDEGGSEDEDDEEFMKRVKKTKAEKLAIVDHSKIDYQPFRKNFYIEVKDITKMAAEEVAAYRKQLELKVHGKDVPKPIKTWVQSGLTSKLLDTIKKLGFEKPMSIQAQALPIIMSGRDCIGIAKTGSGKTLAFVLPMLRHVKDQPAVVPGDGPIGLIMAPTRELVVQIHSDIKKFSKALGINCVAIYGGSGVAQQISELKRGAEIVVCTPGRMIDILCTSSGKITNLRRVTFLVMDEADRMFDMGFEPQITRIVQNTRPDRQTVLFSATFPRQVEILARKVLTKPVEIQVGGRSVVNKDITQLVEVRPENERFFRLLELLGEWFDKGKILVFVHSQDKCDSLLKDLFQHGYPCLSLHGGKDQTDRESTLADFKSNVCSLLIATSVAARGLDVKELELVVNYDVPNHYEDYVHRVGRTGRAGRKGFAVTFISEEEERYAPDLVKALELSEQAVPEDLKGLADRFMAKVKQGTEQAHGTGYGGSGFKFNEEEDEARKSAKKAQAREYGYEEDKSDSDSDEEGGVRKAGGDLAAQAIAAAQAAAAMVAAKAASNANQQTQGTSVGPLLPLAIASNTQNNEATARALQAAFNIQQNLARIQAHAVPEHYEAELEINDFPQNARWKITHKETLGPIQEWTGAAITTRGTFFPQGKIVGANERKLYLFIEGPTELSVKKAKAELKRVLEDCANHALNLPGSAQTGKYSVI.

Disordered stretches follow at residues 1–279 (MGSS…DEID) and 299–358 (MPAA…DDEE). Over residues 64-106 (KERDREERKAREREEREKEKERERARRREERDREERSRRREAA) the composition is skewed to basic and acidic residues. Residues 118 to 131 (RKRRRRSSHHHHHH) show a composition bias toward basic residues. Composition is skewed to basic and acidic residues over residues 161-170 (KKEEEQKQLD) and 181-199 (KEWQ…REQE). The segment covering 201–214 (AGVGTSAAAAAAPA) has biased composition (low complexity). The segment covering 229-239 (DGEESDEEGNQ) has biased composition (acidic residues). Residues 262–272 (NGGDNANGANA) are compositionally biased toward low complexity. Positions 304 to 313 (VDDKNDKSAK) are enriched in basic and acidic residues. Residues 335–358 (EDSDSDYADDEDDEGGSEDEDDEE) are compositionally biased toward acidic residues. The Q motif signature appears at 424-452 (KTWVQSGLTSKLLDTIKKLGFEKPMSIQA). The 179-residue stretch at 455-633 (LPIIMSGRDC…RKVLTKPVEI (179 aa)) folds into the Helicase ATP-binding domain. An ATP-binding site is contributed by 468–475 (AKTGSGKT). Residues 581 to 584 (DEAD) carry the DEAD box motif. A Helicase C-terminal domain is found at 644–805 (DITQLVEVRP…AVPEDLKGLA (162 aa)). The disordered stretch occupies residues 816-868 (TEQAHGTGYGGSGFKFNEEEDEARKSAKKAQAREYGYEEDKSDSDSDEEGGVR). A compositionally biased stretch (acidic residues) spans 855–864 (DKSDSDSDEE). Residues 1012–1037 (TELSVKKAKAELKRVLEDCANHALNL) are a coiled coil.

It belongs to the DEAD box helicase family. DDX46/PRP5 subfamily.

It catalyses the reaction ATP + H2O = ADP + phosphate + H(+). The chain is DEAD-box ATP-dependent RNA helicase 42 from Oryza sativa subsp. japonica (Rice).